The sequence spans 153 residues: Transcriptional repressor NrdR (153 aa).

A zinc finger spans residues 3 to 34; the sequence is CPYCGHPDTRVVDSRPSDEGMAIRRRRECPSC. The ATP-cone domain maps to 49–136; sequence LMVVKRDGRK…VYREFDSVER (88 aa).

This sequence belongs to the NrdR family. Zn(2+) serves as cofactor.

Its function is as follows. Negatively regulates transcription of bacterial ribonucleotide reductase nrd genes and operons by binding to NrdR-boxes. This Thermus thermophilus (strain ATCC BAA-163 / DSM 7039 / HB27) protein is Transcriptional repressor NrdR.